A 120-amino-acid chain; its full sequence is Ribosome-binding factor A (120 aa).

Belongs to the RbfA family. Monomer. Binds 30S ribosomal subunits, but not 50S ribosomal subunits or 70S ribosomes.

Its subcellular location is the cytoplasm. In terms of biological role, one of several proteins that assist in the late maturation steps of the functional core of the 30S ribosomal subunit. Associates with free 30S ribosomal subunits (but not with 30S subunits that are part of 70S ribosomes or polysomes). Required for efficient processing of 16S rRNA. May interact with the 5'-terminal helix region of 16S rRNA. In Buchnera aphidicola subsp. Acyrthosiphon pisum (strain 5A), this protein is Ribosome-binding factor A.